A 223-amino-acid polypeptide reads, in one-letter code: Ribosomal RNA small subunit methyltransferase G (223 aa).

Residues G90, L95, V141–E142, and R156 each bind S-adenosyl-L-methionine.

This sequence belongs to the methyltransferase superfamily. RNA methyltransferase RsmG family.

The protein localises to the cytoplasm. It carries out the reaction guanosine(527) in 16S rRNA + S-adenosyl-L-methionine = N(7)-methylguanosine(527) in 16S rRNA + S-adenosyl-L-homocysteine. Functionally, specifically methylates the N7 position of guanine in position 527 of 16S rRNA. This is Ribosomal RNA small subunit methyltransferase G from Ralstonia nicotianae (strain ATCC BAA-1114 / GMI1000) (Ralstonia solanacearum).